The primary structure comprises 288 residues: Homoserine kinase (288 aa).

79–89 (PLARGLGSSSS) provides a ligand contact to ATP.

It belongs to the GHMP kinase family. Homoserine kinase subfamily.

It is found in the cytoplasm. It carries out the reaction L-homoserine + ATP = O-phospho-L-homoserine + ADP + H(+). It participates in amino-acid biosynthesis; L-threonine biosynthesis; L-threonine from L-aspartate: step 4/5. Functionally, catalyzes the ATP-dependent phosphorylation of L-homoserine to L-homoserine phosphate. The sequence is that of Homoserine kinase from Streptococcus gordonii (strain Challis / ATCC 35105 / BCRC 15272 / CH1 / DL1 / V288).